Here is a 127-residue protein sequence, read N- to C-terminus: Fluoride-specific ion channel FluC (127 aa).

4 consecutive transmembrane segments (helical) span residues 4–24 (IIYI…TQIA), 34–54 (FPFP…IGFF), 65–85 (FELR…FSTL), and 97–117 (FYGI…LAVL). Residues Gly-77 and Thr-80 each contribute to the Na(+) site.

The protein belongs to the fluoride channel Fluc/FEX (TC 1.A.43) family.

The protein resides in the cell inner membrane. It carries out the reaction fluoride(in) = fluoride(out). Its activity is regulated as follows. Na(+) is not transported, but it plays an essential structural role and its presence is essential for fluoride channel function. Functionally, fluoride-specific ion channel. Important for reducing fluoride concentration in the cell, thus reducing its toxicity. In Bacteroides fragilis (strain ATCC 25285 / DSM 2151 / CCUG 4856 / JCM 11019 / LMG 10263 / NCTC 9343 / Onslow / VPI 2553 / EN-2), this protein is Fluoride-specific ion channel FluC.